A 586-amino-acid polypeptide reads, in one-letter code: Inner membrane protein YejM (586 aa).

The Cytoplasmic segment spans residues 1 to 20; the sequence is MVTHRQRYREKVSQMVSWGH. A helical transmembrane segment spans residues 21–43; that stretch reads WFALFNILLSLVIGSRYLFIADW. Residues 44–57 are Periplasmic-facing; that stretch reads PTTLAGRIYSYVSI. A helical membrane pass occupies residues 58–80; the sequence is IGHFSFLVFATYLLILFPLTFIV. The Cytoplasmic portion of the chain corresponds to 81–84; it reads GSQR. A helical membrane pass occupies residues 85 to 103; sequence LMRFLSVILATAGMTLLLI. The Periplasmic segment spans residues 104–134; the sequence is DSEVFTRFHLHLNPIVWQLVINPDENEMARD. A helical membrane pass occupies residues 135 to 157; the sequence is WQLMFISVPVILLLELVFATWSW. Topologically, residues 158-168 are cytoplasmic; sequence QKLRSLTRRRR. A helical transmembrane segment spans residues 169-191; it reads FARPLAAFLFIAFIASHVVYIWA. Topologically, residues 192 to 586 are periplasmic; it reads DANFYRPITM…LTDEKRFIAN (395 aa).

It to H.influenzae HI_0842.

The protein localises to the cell inner membrane. In Escherichia coli O157:H7, this protein is Inner membrane protein YejM (yejM).